We begin with the raw amino-acid sequence, 141 residues long: Small ribosomal subunit protein bS6 (141 aa).

The disordered stretch occupies residues 97–141; the sequence is TGQSEMLKAEENRSERRERRDRPEHSDSADGDDGDNSDVSDNADE. Positions 103 to 124 are enriched in basic and acidic residues; sequence LKAEENRSERRERRDRPEHSDS. The segment covering 125 to 141 has biased composition (acidic residues); that stretch reads ADGDDGDNSDVSDNADE.

This sequence belongs to the bacterial ribosomal protein bS6 family.

Its function is as follows. Binds together with bS18 to 16S ribosomal RNA. This Pseudomonas syringae pv. syringae (strain B728a) protein is Small ribosomal subunit protein bS6.